The sequence spans 335 residues: MDRIVEIEKYSFDETYETSLRPSNFDGYIGQESIKKNLNVFIAAAKKRNECLDHILFSGPAGLGKTTLANIISYEMSANIKTTAAPMIEKSGDLAAILTNLSEGDILFIDEIHRLSPAIEEVLYPAMEDYRLDIIIGSGPAAQTIKIDLPKFTLIGATTRAGMLSNPLRDRFGMQFRLEFYKDSELALILQKAALKLNKTCEEKAALEIAKRSRSTPRIALRLLKRVRDFADVNDEEIITEKRANEALNSLGVNELGFDAMDLRYLELLTAAKQKPIGLASIAAALSEDENTIEDVIEPYLLANGYIERTAKGRIASAKSYSALKLNYEKTLFEE.

The large ATPase domain (RuvB-L) stretch occupies residues 1-181 (MDRIVEIEKY…FGMQFRLEFY (181 aa)). Leu20 contacts ATP. The ADP site is built by Arg21, Tyr28, Ile29, Gly62, Leu63, Gly64, Lys65, Thr66, and Thr67. ATP-binding positions include 128–130 (EDY) and Arg171. Positions 181 and 218 each coordinate ADP. The segment at 182-252 (KDSELALILQ…RANEALNSLG (71 aa)) is small ATPAse domain (RuvB-S). Positions 255-335 (ELGFDAMDLR…LNYEKTLFEE (81 aa)) are head domain (RuvB-H). Positions 309 and 314 each coordinate DNA.

The protein belongs to the RuvB family. In terms of assembly, homohexamer. Forms an RuvA(8)-RuvB(12)-Holliday junction (HJ) complex. HJ DNA is sandwiched between 2 RuvA tetramers; dsDNA enters through RuvA and exits via RuvB. An RuvB hexamer assembles on each DNA strand where it exits the tetramer. Each RuvB hexamer is contacted by two RuvA subunits (via domain III) on 2 adjacent RuvB subunits; this complex drives branch migration. In the full resolvosome a probable DNA-RuvA(4)-RuvB(12)-RuvC(2) complex forms which resolves the HJ.

Its subcellular location is the cytoplasm. The catalysed reaction is ATP + H2O = ADP + phosphate + H(+). Functionally, the RuvA-RuvB-RuvC complex processes Holliday junction (HJ) DNA during genetic recombination and DNA repair, while the RuvA-RuvB complex plays an important role in the rescue of blocked DNA replication forks via replication fork reversal (RFR). RuvA specifically binds to HJ cruciform DNA, conferring on it an open structure. The RuvB hexamer acts as an ATP-dependent pump, pulling dsDNA into and through the RuvAB complex. RuvB forms 2 homohexamers on either side of HJ DNA bound by 1 or 2 RuvA tetramers; 4 subunits per hexamer contact DNA at a time. Coordinated motions by a converter formed by DNA-disengaged RuvB subunits stimulates ATP hydrolysis and nucleotide exchange. Immobilization of the converter enables RuvB to convert the ATP-contained energy into a lever motion, pulling 2 nucleotides of DNA out of the RuvA tetramer per ATP hydrolyzed, thus driving DNA branch migration. The RuvB motors rotate together with the DNA substrate, which together with the progressing nucleotide cycle form the mechanistic basis for DNA recombination by continuous HJ branch migration. Branch migration allows RuvC to scan DNA until it finds its consensus sequence, where it cleaves and resolves cruciform DNA. This chain is Holliday junction branch migration complex subunit RuvB, found in Campylobacter jejuni subsp. jejuni serotype O:2 (strain ATCC 700819 / NCTC 11168).